The following is a 323-amino-acid chain: Cysteine synthase A (323 aa).

The hydrogen sulfide site is built by Asn-8 and Arg-35. Lys-42 is modified (N6-(pyridoxal phosphate)lysine). Pyridoxal 5'-phosphate contacts are provided by residues Asn-72 and 177–181 (GTGGT). Leu-269 serves as a coordination point for hydrogen sulfide. Ser-273 provides a ligand contact to pyridoxal 5'-phosphate.

Belongs to the cysteine synthase/cystathionine beta-synthase family. In terms of assembly, homodimer. It depends on pyridoxal 5'-phosphate as a cofactor.

The enzyme catalyses O-acetyl-L-serine + hydrogen sulfide = L-cysteine + acetate. It functions in the pathway amino-acid biosynthesis; L-cysteine biosynthesis; L-cysteine from L-serine: step 2/2. Two cysteine synthase enzymes are found. Both catalyze the same reaction. Cysteine synthase B can also use thiosulfate in place of sulfide to give cysteine thiosulfonate as a product. The polypeptide is Cysteine synthase A (cysK) (Salmonella typhi).